A 480-amino-acid polypeptide reads, in one-letter code: Adenylosuccinate lyase (480 aa).

The AMP site is built by arginine 14, tyrosine 15, arginine 79, histidine 80, and aspartate 81. Histidine 80 contributes to the fumarate binding site. Histidine 153 serves as the catalytic Proton donor/acceptor. Glutamine 236 lines the AMP pocket. Glutamine 236 lines the fumarate pocket. Glutamine 236 contributes to the N(6)-(1,2-dicarboxyethyl)-AMP binding site. Serine 284 serves as the catalytic Proton donor/acceptor. Fumarate-binding residues include serine 285, lysine 290, and asparagine 292. N(6)-(1,2-dicarboxyethyl)-AMP is bound by residues serine 285, lysine 290, and asparagine 292. Residue arginine 298 participates in AMP binding. 3 residues coordinate N(6)-(1,2-dicarboxyethyl)-AMP: arginine 324, serine 329, and arginine 333. AMP contacts are provided by serine 329 and arginine 333.

This sequence belongs to the lyase 1 family. Adenylosuccinate lyase subfamily. As to quaternary structure, homotetramer.

The catalysed reaction is N(6)-(1,2-dicarboxyethyl)-AMP = fumarate + AMP. It participates in purine metabolism; AMP biosynthesis via salvage pathway. Catalyzes conversion of succinyladenosine monophosphate (SAMP) to AMP and fumarate on the purine salvage pathway. The protein is Adenylosuccinate lyase of Schistosoma mansoni (Blood fluke).